The primary structure comprises 110 residues: uncharacterized protein (110 aa).

Residues 1–20 (MNQQNQKISNPQTPVPTTSE) show a composition bias toward polar residues. The segment at 1–24 (MNQQNQKISNPQTPVPTTSEMNDR) is disordered.

This is an uncharacterized protein from Bacillus subtilis (strain 168).